Reading from the N-terminus, the 277-residue chain is Formamidopyrimidine-DNA glycosylase (277 aa).

Catalysis depends on Pro2, which acts as the Schiff-base intermediate with DNA. Glu3 functions as the Proton donor in the catalytic mechanism. Catalysis depends on Lys58, which acts as the Proton donor; for beta-elimination activity. DNA-binding residues include His94, Arg113, and Arg156. The segment at 241 to 277 (LVYGREGVPCPNCGAEHPIQRITQAGRSTFFCPTCQK) adopts an FPG-type zinc-finger fold. The Proton donor; for delta-elimination activity role is filled by Arg267.

The protein belongs to the FPG family. In terms of assembly, monomer. Requires Zn(2+) as cofactor.

The catalysed reaction is Hydrolysis of DNA containing ring-opened 7-methylguanine residues, releasing 2,6-diamino-4-hydroxy-5-(N-methyl)formamidopyrimidine.. The enzyme catalyses 2'-deoxyribonucleotide-(2'-deoxyribose 5'-phosphate)-2'-deoxyribonucleotide-DNA = a 3'-end 2'-deoxyribonucleotide-(2,3-dehydro-2,3-deoxyribose 5'-phosphate)-DNA + a 5'-end 5'-phospho-2'-deoxyribonucleoside-DNA + H(+). Its function is as follows. Involved in base excision repair of DNA damaged by oxidation or by mutagenic agents. Acts as a DNA glycosylase that recognizes and removes damaged bases. Has a preference for oxidized purines, such as 7,8-dihydro-8-oxoguanine (8-oxoG). Has AP (apurinic/apyrimidinic) lyase activity and introduces nicks in the DNA strand. Cleaves the DNA backbone by beta-delta elimination to generate a single-strand break at the site of the removed base with both 3'- and 5'-phosphates. This Gluconobacter oxydans (strain 621H) (Gluconobacter suboxydans) protein is Formamidopyrimidine-DNA glycosylase.